Reading from the N-terminus, the 596-residue chain is Linalool synthase TPS3, chloroplastic (596 aa).

The transit peptide at 1-39 directs the protein to the chloroplast; the sequence is MISSLNPLFTTHRSGVIAQQFFASSAAASINSVSSLKIA. Positions 308, 345, 349, 486, and 489 each coordinate (2E)-geranyl diphosphate. Aspartate 345 and aspartate 349 together coordinate Mg(2+). The DDXXD motif signature appears at 345 to 349; sequence DDIYD. The Mg(2+) site is built by asparagine 489, threonine 493, and serine 497.

Belongs to the terpene synthase family. Tpsb subfamily. In terms of assembly, monomer. The cofactor is Mg(2+). Mn(2+) serves as cofactor. In terms of tissue distribution, expressed in flowers and fruits.

The protein localises to the plastid. It localises to the chloroplast. The enzyme catalyses (2E)-geranyl diphosphate = beta-myrcene + diphosphate. The catalysed reaction is (2E)-geranyl diphosphate + H2O = linalool + diphosphate. It catalyses the reaction (2E)-geranyl diphosphate = (Z)-beta-ocimene + diphosphate. It carries out the reaction (2E)-geranyl diphosphate = (E)-beta-ocimene + diphosphate. It participates in secondary metabolite biosynthesis; terpenoid biosynthesis. Monoterpene synthase (mono-TPS) involved in the biosynthesis of monoterpenes natural products, constituent of coffee beverage aroma. Catalyzes the conversion of (2E)-geranyl diphosphate (GPP) into linalool and beta-myrcene, and, as minor products, cis-ocimene and trans-ocimene. Not able to use geranylgeranyl pyrophosphate (GGPP) and farnesyl pyrophosphate (FPP) as substrates. The polypeptide is Linalool synthase TPS3, chloroplastic (Coffea arabica (Arabian coffee)).